Here is a 207-residue protein sequence, read N- to C-terminus: Ribosomal RNA small subunit methyltransferase G (207 aa).

Residues Gly-75, Met-80, 126 to 127 (VE), and Arg-141 contribute to the S-adenosyl-L-methionine site.

It belongs to the methyltransferase superfamily. RNA methyltransferase RsmG family.

The protein localises to the cytoplasm. The enzyme catalyses guanosine(527) in 16S rRNA + S-adenosyl-L-methionine = N(7)-methylguanosine(527) in 16S rRNA + S-adenosyl-L-homocysteine. In terms of biological role, specifically methylates the N7 position of guanine in position 527 of 16S rRNA. This is Ribosomal RNA small subunit methyltransferase G from Laribacter hongkongensis (strain HLHK9).